Here is a 909-residue protein sequence, read N- to C-terminus: MFGKLLTKVFGSRNDRTLKGLQKVVIKINALEADYEKLTDEELKAKTAEFRERLAAGETLDDIMAEAFATVREASKRVFEMRHFDVQLLGGMVLDSNRIAEMRTGEGKTLTATLPAYLNALTGKGVHVITVNDYLARRDAENNRPLFEFLGLTVGINVAGIGQQEKKAAYNADITYGTNNEFGFDYLRDNMAFSPQDRVQRPLHYALIDEVDSILIDEARTPLIISGAAEDSSELYTKINTLIPNLIRQDKEDSEEYVGEGDYSIDEKAKQVHFTERGQEKVENLLIERGMLAEGDSLYSAANISLLHHVNAALRAHTLFERDVDYIVQDGEVIIVDEHTGRTMPGRRWSEGLHQAVEAKEGVHIQNENQTLASITFQNYFRQYEKLAGMTGTADTEAFEFQHIYGLDTVVVPTNRPMVRKDMADLVYLTANEKYQAIIKDIKDCRERGQPVLVGTVSIEQSELLARLMVQEKIPHQVLNAKFHEKEAEIVAQAGRTGAVTIATNMAGRGTDIVLGGNWNMEIDALDNPTPEQKAKIKADWQVRHDAVVAAGGLHILGTERHESRRIDNQLRGRAGRQGDAGSSRFYLSMEDSLMRIFASDRVSGMMKKLGMEEGEAIEHPWVSRAIENAQRKVEARNFDIRKQLLEFDDVANDQRQVVYAQRNELMDAESIEDTIKNIQDDVIGAVIDQYIPPQSVEELWDVPGLEQRLNQEFMLKLPIQEWLDKEDDLHEESLRERIITSWSDAYKAKEEMVGASVLRQFEKAVMLQTLDGLWKEHLAAMDHLRQGIHLRGYAQKNPKQEYKRESFELFQQLLNTLKHDVISVLSKVQVQAQSDVEEMEARRREEDAKIQRDYQHAAAEALVGGGDEDDESIAAHTPMIRDGDKVGRNDPCPCGSGRKYKQCHGKLS.

ATP contacts are provided by residues Gln87, 105–109 (GEGKT), and Asp512. The disordered stretch occupies residues 863–909 (LVGGGDEDDESIAAHTPMIRDGDKVGRNDPCPCGSGRKYKQCHGKLS). Over residues 880–889 (MIRDGDKVGR) the composition is skewed to basic and acidic residues. Cys893, Cys895, Cys904, and His905 together coordinate Zn(2+). The segment covering 899–909 (RKYKQCHGKLS) has biased composition (basic residues).

Belongs to the SecA family. As to quaternary structure, monomer and homodimer. Part of the essential Sec protein translocation apparatus which comprises SecA, SecYEG and auxiliary proteins SecDF-YajC and YidC. It depends on Zn(2+) as a cofactor.

The protein localises to the cell inner membrane. Its subcellular location is the cytoplasm. The catalysed reaction is ATP + H2O + cellular proteinSide 1 = ADP + phosphate + cellular proteinSide 2.. Functionally, part of the Sec protein translocase complex. Interacts with the SecYEG preprotein conducting channel. Has a central role in coupling the hydrolysis of ATP to the transfer of proteins into and across the cell membrane, serving both as a receptor for the preprotein-SecB complex and as an ATP-driven molecular motor driving the stepwise translocation of polypeptide chains across the membrane. The sequence is that of Protein translocase subunit SecA from Shewanella putrefaciens (strain CN-32 / ATCC BAA-453).